A 545-amino-acid chain; its full sequence is Chaperonin GroEL 1 (545 aa).

Residues 30 to 33, K51, 87 to 91, G415, and D495 contribute to the ATP site; these read TLGP and DGTTT.

The protein belongs to the chaperonin (HSP60) family. In terms of assembly, forms a cylinder of 14 subunits composed of two heptameric rings stacked back-to-back. Interacts with the co-chaperonin GroES.

It is found in the cytoplasm. The enzyme catalyses ATP + H2O + a folded polypeptide = ADP + phosphate + an unfolded polypeptide.. In terms of biological role, together with its co-chaperonin GroES, plays an essential role in assisting protein folding. The GroEL-GroES system forms a nano-cage that allows encapsulation of the non-native substrate proteins and provides a physical environment optimized to promote and accelerate protein folding. This is Chaperonin GroEL 1 from Rhizobium etli (strain ATCC 51251 / DSM 11541 / JCM 21823 / NBRC 15573 / CFN 42).